We begin with the raw amino-acid sequence, 517 residues long: Ribonuclease Y (517 aa).

A helical membrane pass occupies residues 4 to 24; the sequence is LIYIVILFVGIAAGAFFGISV. Residues 207–267 form the KH domain; that stretch reads TISTVALPND…LRREVARRTI (61 aa). An HD domain is found at 333 to 426; that stretch reads VLAHSVEVAQ…VAAADAISAA (94 aa).

The protein belongs to the RNase Y family.

Its subcellular location is the cell membrane. Its function is as follows. Endoribonuclease that initiates mRNA decay. The sequence is that of Ribonuclease Y from Fervidobacterium nodosum (strain ATCC 35602 / DSM 5306 / Rt17-B1).